The chain runs to 202 residues: U-Kazal-Dg21.2 (202 aa).

The N-terminal stretch at 1 to 20 is a signal peptide; the sequence is MKYFLWSAVTIFAIVNVVGA. The propeptide occupies 21–87; that stretch reads KNSDFDPRCL…SFCQVEEDFD (67 aa). Kazal-like domains lie at 23–77, 85–140, and 148–202; these read SDFD…KTLM, DFDS…ICRN, and IDPK…KGEC. Disulfide bonds link cysteine 29–cysteine 62, cysteine 33–cysteine 55, cysteine 91–cysteine 124, cysteine 95–cysteine 117, and cysteine 103–cysteine 138. An N-linked (GlcNAc...) asparagine glycan is attached at asparagine 140. Residues 142–202 constitute a propeptide that is removed on maturation; that stretch reads SFKSELIDPK…NWTLIRKGEC (61 aa). Intrachain disulfides connect cysteine 154–cysteine 187, cysteine 158–cysteine 180, and cysteine 166–cysteine 202. Asparagine 193 carries N-linked (GlcNAc...) asparagine glycosylation.

In terms of tissue distribution, expressed by the venom gland.

It is found in the secreted. May act as a serine protease inhibitor, since it possess the kazal serine protease inhibitor signature. The recombinant peptide does not produce toxic effects on insects. The chain is U-Kazal-Dg21.2 from Dolopus genitalis (Giant Australian assassin fly).